The sequence spans 735 residues: Phosphoribosylformylglycinamidine synthase subunit PurL (735 aa).

H49 is a catalytic residue. Residues Y52 and K91 each coordinate ATP. E93 is a Mg(2+) binding site. Substrate is bound by residues 94-97 (SHNH) and R116. Residue H95 is the Proton acceptor of the active site. A Mg(2+)-binding site is contributed by D117. Q240 provides a ligand contact to substrate. D268 provides a ligand contact to Mg(2+). Position 312-314 (312-314 (ESQ)) interacts with substrate. Residues D493 and G530 each contribute to the ATP site. N531 lines the Mg(2+) pocket. S533 serves as a coordination point for substrate.

The protein belongs to the FGAMS family. Monomer. Part of the FGAM synthase complex composed of 1 PurL, 1 PurQ and 2 PurS subunits.

Its subcellular location is the cytoplasm. The catalysed reaction is N(2)-formyl-N(1)-(5-phospho-beta-D-ribosyl)glycinamide + L-glutamine + ATP + H2O = 2-formamido-N(1)-(5-O-phospho-beta-D-ribosyl)acetamidine + L-glutamate + ADP + phosphate + H(+). It functions in the pathway purine metabolism; IMP biosynthesis via de novo pathway; 5-amino-1-(5-phospho-D-ribosyl)imidazole from N(2)-formyl-N(1)-(5-phospho-D-ribosyl)glycinamide: step 1/2. Part of the phosphoribosylformylglycinamidine synthase complex involved in the purines biosynthetic pathway. Catalyzes the ATP-dependent conversion of formylglycinamide ribonucleotide (FGAR) and glutamine to yield formylglycinamidine ribonucleotide (FGAM) and glutamate. The FGAM synthase complex is composed of three subunits. PurQ produces an ammonia molecule by converting glutamine to glutamate. PurL transfers the ammonia molecule to FGAR to form FGAM in an ATP-dependent manner. PurS interacts with PurQ and PurL and is thought to assist in the transfer of the ammonia molecule from PurQ to PurL. In Methylocella silvestris (strain DSM 15510 / CIP 108128 / LMG 27833 / NCIMB 13906 / BL2), this protein is Phosphoribosylformylglycinamidine synthase subunit PurL.